The primary structure comprises 369 residues: Anhydro-N-acetylmuramic acid kinase (369 aa).

12-19 (GTSLDGVD) contributes to the ATP binding site.

Belongs to the anhydro-N-acetylmuramic acid kinase family.

The enzyme catalyses 1,6-anhydro-N-acetyl-beta-muramate + ATP + H2O = N-acetyl-D-muramate 6-phosphate + ADP + H(+). The protein operates within amino-sugar metabolism; 1,6-anhydro-N-acetylmuramate degradation. Its pathway is cell wall biogenesis; peptidoglycan recycling. Its function is as follows. Catalyzes the specific phosphorylation of 1,6-anhydro-N-acetylmuramic acid (anhMurNAc) with the simultaneous cleavage of the 1,6-anhydro ring, generating MurNAc-6-P. Is required for the utilization of anhMurNAc either imported from the medium or derived from its own cell wall murein, and thus plays a role in cell wall recycling. The polypeptide is Anhydro-N-acetylmuramic acid kinase (Escherichia coli O45:K1 (strain S88 / ExPEC)).